We begin with the raw amino-acid sequence, 24 residues long: Brevinin-1Ra (24 aa).

A disulfide bridge connects residues Cys18 and Cys24.

In terms of tissue distribution, expressed by the skin glands.

The protein resides in the secreted. In terms of biological role, antimicrobial peptide. In Pelophylax ridibundus (Marsh frog), this protein is Brevinin-1Ra.